The chain runs to 229 residues: MSQGDSNPAAIPHAAEDIQGDDRWMSQHNRFVLDCKDKEPDVLFVGDSMVQLMQQYEIWRELFSPLHALNFGIGGDTTRHVLWRLKNGELENIKPKVIVVWVGTNNHENTAEEVAGGIEAIVQLINTRQPQAKIIVLGLLPRGEKPNPLRQKNAKVNQLLKVSLPKLANVQLLDIDGGFVHSDGAISCHDMFDFLHLTGGGYAKICKPLHELIMQLLEETPEEKQTTIA.

S2 bears the N-acetylserine mark. S2 is modified (phosphoserine). S48 is a catalytic residue. Position 64 is a phosphoserine (S64). Residues D193 and H196 contribute to the active site. T220 carries the phosphothreonine modification.

It belongs to the 'GDSL' lipolytic enzyme family. Platelet-activating factor acetylhydrolase IB beta/gamma subunits subfamily. In terms of assembly, forms a catalytic dimer which is either homodimer (alpha2/alpha2 homodimer) or heterodimer with PAFAH1B3 (alpha2/alpha1 heterodimer). Component of the cytosolic (PAF-AH (I)) heterotetrameric enzyme, which is composed of PAFAH1B1 (beta), PAFAH1B2 (alpha2) and PAFAH1B3 (alpha1) subunits. The catalytic activity of the enzyme resides in the alpha1 (PAFAH1B3) and alpha2 (PAFAH1B2) subunits, whereas the beta subunit (PAFAH1B1) has regulatory activity. Trimer formation is not essential for the catalytic activity. Interacts (homodimer form) with PAFAH1B1 (homodimer form); PAFAH1B2 competes with NDEL1 for PAFAH1B1 binding. Interacts with VLDLR; this interaction may modulate the Reelin pathway.

The protein localises to the cytoplasm. The catalysed reaction is a 1-O-alkyl-2-acetyl-sn-glycero-3-phosphocholine + H2O = a 1-O-alkyl-sn-glycero-3-phosphocholine + acetate + H(+). The enzyme catalyses 1-O-hexadecyl-2-acetyl-sn-glycero-3-phosphocholine + H2O = 1-O-hexadecyl-sn-glycero-3-phosphocholine + acetate + H(+). It carries out the reaction 1-O-hexadecyl-2-acetyl-sn-glycero-3-phosphate + H2O = 1-O-hexadecyl-sn-glycero-3-phosphate + acetate + H(+). It catalyses the reaction 1-O-hexadecyl-2-acetyl-sn-glycero-3-phosphoethanolamine + H2O = 1-O-hexadecyl-sn-glycero-3-phosphoethanolamine + acetate + H(+). Beta subunit (PAFAH1B1) stimulates the acetylhydrolase activity of the alpha2/alpha2 catalytic homodimer. Its function is as follows. Alpha2 catalytic subunit of the cytosolic type I platelet-activating factor (PAF) acetylhydrolase (PAF-AH (I)) heterotetrameric enzyme that catalyzes the hydrolyze of the acetyl group at the sn-2 position of PAF and its analogs and modulates the action of PAF. The activity and substrate specificity of PAF-AH (I) are affected by its subunit composition. The alpha2/alpha2 homodimer (PAFAH1B2/PAFAH1B2 homodimer) hydrolyzes PAF and 1-O-alkyl-2-acetyl-sn-glycero-3-phosphorylethanolamine (AAGPE) more efficiently than 1-O-alkyl-2-acetyl-sn-glycero-3-phosphoric acid (AAGPA). In contrast, the alpha1/alpha2 heterodimer(PAFAH1B3/PAFAH1B3 heterodimer) hydrolyzes AAGPA more efficiently than PAF, but has little hydrolytic activity towards AAGPE. May play a role in male germ cell meiosis during the late pachytenestage and meiotic divisions as well as early spermiogenesis. The protein is Platelet-activating factor acetylhydrolase IB subunit alpha2 of Mus musculus (Mouse).